The primary structure comprises 500 residues: Lariat debranching enzyme (500 aa).

Positions 1–25 (MSSKNPVDEQPCCGSHEGSHQDPAP) are disordered. The a divalent metal cation site is built by C48, H50, D79, and N124. A lariat recognition loop region spans residues 164-194 (SGIFSQGDFQFSHYERPSFSERDVKSAYHVR). A divalent metal cation contacts are provided by H222, H274, and H276. Residues 453-500 (DDANAKPNQDDVDFGDEDFVIDRGHTSDEPEAKKSRLDEDKFEAVPSE) form a disordered region. Positions 462 to 471 (DDVDFGDEDF) are enriched in acidic residues. A compositionally biased stretch (basic and acidic residues) spans 472–500 (VIDRGHTSDEPEAKKSRLDEDKFEAVPSE).

This sequence belongs to the lariat debranching enzyme family. Requires Fe(2+) as cofactor. It depends on Zn(2+) as a cofactor. Mn(2+) is required as a cofactor.

Its subcellular location is the nucleus. Its activity is regulated as follows. Active in presence of diverse metals including Fe(2+), Zn(2+), Mn(2+). Binds two metal cations in two adjacent alpha and beta metal-binding pockets. Functionally, cleaves the 2'-5' phosphodiester linkage at the branch point of lariat intron pre-mRNAs after splicing and converts them into linear molecules that are subsequently degraded. It thereby facilitates ribonucleotide turnover. The protein is Lariat debranching enzyme of Caenorhabditis elegans.